A 147-amino-acid polypeptide reads, in one-letter code: Heavy metal-associated isoprenylated plant protein 27 (147 aa).

An HMA domain is found at 18 to 82 (FQKVEIKVKM…VMHRTGKKAE (65 aa)). Positions 29 and 32 each coordinate a metal cation. Cys144 carries the cysteine methyl ester modification. Cys144 carries the S-farnesyl cysteine lipid modification. Positions 145-147 (TIM) are cleaved as a propeptide — removed in mature form.

The protein belongs to the HIPP family. In terms of assembly, interacts with UBP16. Interacts with ZHD11/HB29.

Its subcellular location is the membrane. In terms of biological role, heavy-metal-binding protein. Binds cadmium. May be involved in cadmium transport and play a role in cadmium detoxification. The polypeptide is Heavy metal-associated isoprenylated plant protein 27 (Arabidopsis thaliana (Mouse-ear cress)).